We begin with the raw amino-acid sequence, 142 residues long: Salivary protein 15a (142 aa).

An N-terminal signal peptide occupies residues 1–20; it reads MKYLGLALISAVFLIGACQA. 3 disulfides stabilise this stretch: cysteine 27-cysteine 44, cysteine 40-cysteine 108, and cysteine 91-cysteine 117.

Belongs to the PBP/GOBP family. In terms of tissue distribution, female salivary gland (at protein level).

The protein localises to the secreted. In terms of biological role, inhibits contact coagulation pathway activation in the host by sequestering anionic polymers, such as polyphosphate and dextran sulfate, and thus blocking interaction of protein components of the pathway with negatively charged surfaces. Inhibits dextran sulfate-mediated autoactivation of host coagulation factor XII (F12). Inhibits dextran sulfate-mediated autoactivation of host factor XI (F11). Inhibits polyphosphate-mediated activation of host F11 by thrombin (F2). May inhibit dextran sulfate-mediated bradykinin generation in host plasma. This chain is Salivary protein 15a, found in Phlebotomus duboscqi (Sandfly).